A 284-amino-acid polypeptide reads, in one-letter code: 2-dehydro-3-deoxyphosphooctonate aldolase (284 aa).

Belongs to the KdsA family.

Its subcellular location is the cytoplasm. The enzyme catalyses D-arabinose 5-phosphate + phosphoenolpyruvate + H2O = 3-deoxy-alpha-D-manno-2-octulosonate-8-phosphate + phosphate. It functions in the pathway carbohydrate biosynthesis; 3-deoxy-D-manno-octulosonate biosynthesis; 3-deoxy-D-manno-octulosonate from D-ribulose 5-phosphate: step 2/3. The protein operates within bacterial outer membrane biogenesis; lipopolysaccharide biosynthesis. The polypeptide is 2-dehydro-3-deoxyphosphooctonate aldolase (Burkholderia vietnamiensis (strain G4 / LMG 22486) (Burkholderia cepacia (strain R1808))).